Consider the following 117-residue polypeptide: MSKLSRKSILDEDEDVEEILPKTRGDERSTWVSSSSFVSSSLIFCKCVVTVVELDVGVALLGIVGRVVPLYTVTLLEPEFLNLGGELSWCSMTNFCELFFYFFSFFFSKKRPNIDSK.

3 helical membrane passes run 32–52, 56–76, and 87–107; these read VSSSSFVSSSLIFCKCVVTVV, VGVALLGIVGRVVPLYTVTLL, and LSWCSMTNFCELFFYFFSFFF.

The protein resides in the membrane. This is an uncharacterized protein from Saccharomyces cerevisiae (strain ATCC 204508 / S288c) (Baker's yeast).